The chain runs to 596 residues: MAGAIASRMSFSSLKRKQPKTFTVRIVTMDAEMEFNCEMKWKGKDLFDLVCRTLGLRETWFFGLQYTIKDTVAWLKMDKKVLDHDVSKEEPVTFHFLAKFYPENAEEELVQEITQHLFFLQVKKQILDEKVYCPPEASVLLASYAVQAKYGDYDPSVHKRGFLAQEELLPKRVINLYQMTPEMWEERITAWYAEHRGRARDEAEMEYLKIAQDLEMYGVNYFTIRNKKGTELLLGVDALGLHIYDPENRLTPKISFPWNEIRNISYSDKEFTIKPLDKKIDVFKFNSSKLRVNKLILQLCIGNHDLFMRRRKADSLEVQQMKAQAREEKARKQMERQRLAREKQMREEAERTRDELERRLLQMKEEATMANEALMRSEETADLLAEKAQITEEEAKLLAQKAAEAEQEMQRIKATAIRTEEEKRLMEQKVLEAEVLALKMAEESERRAKEADQLKQDLQEAREAERRAKQKLLEIATKPTYPPMNPIPPPLPPDIPSFDIIADSLSFDFKDTDMKRLSMEIEKEKVEYMEKSKHLQEQLNELKTEIEALKLKERETALDVLHSESSDRGGPSSKHNTIKKLTLQSAKSRVAFFEEL.

Serine 13 is subject to Phosphoserine. Residues 22-311 form the FERM domain; the sequence is FTVRIVTMDA…GNHDLFMRRR (290 aa). Phosphoserine; by PAK is present on serine 518. The tract at residues 560–580 is disordered; that stretch reads VLHSESSDRGGPSSKHNTIKK.

Interacts with NHERF1, HGS and AGAP2. Interacts with SGSM3. Interacts (via FERM domain) with MPP1. Interacts with LAYN. Interacts with WWC1. Interacts with the CUL4A-RBX1-DDB1-VprBP/DCAF1 E3 ubiquitin-protein ligase complex. The unphosphorylated form interacts (via FERM domain) with VPRBP/DCAF1. Interacts (via FERM domain) with NOP53; the interaction is direct. Interacts with SCHIP1; the interaction is direct. Phosphorylation of Ser-518 inhibits nuclear localization by disrupting the intramolecular association of the FERM domain with the C-terminal tail. The dephosphorylation of Ser-518 favors the interaction with NOP53. In terms of processing, ubiquitinated by the CUL4A-RBX1-DDB1-DCAF1/VprBP E3 ubiquitin-protein ligase complex for ubiquitination and subsequent proteasome-dependent degradation.

Its subcellular location is the cell membrane. It localises to the cell projection. The protein resides in the cytoplasm. It is found in the cytoskeleton. The protein localises to the nucleus. In terms of biological role, probable regulator of the Hippo/SWH (Sav/Wts/Hpo) signaling pathway, a signaling pathway that plays a pivotal role in tumor suppression by restricting proliferation and promoting apoptosis. Along with WWC1 can synergistically induce the phosphorylation of LATS1 and LATS2 and can probably function in the regulation of the Hippo/SWH (Sav/Wts/Hpo) signaling pathway. May act as a membrane stabilizing protein. May inhibit PI3 kinase by binding to AGAP2 and impairing its stimulating activity. Suppresses cell proliferation and tumorigenesis by inhibiting the CUL4A-RBX1-DDB1-VprBP/DCAF1 E3 ubiquitin-protein ligase complex. Plays a role in lens development and is required for complete fiber cell terminal differentiation, maintenance of cell polarity and separation of the lens vesicle from the corneal epithelium. The polypeptide is Merlin (Nf2) (Mus musculus (Mouse)).